Consider the following 292-residue polypeptide: Homoserine kinase (292 aa).

Residue 84–94 coordinates ATP; the sequence is PLSRGLGSSSA.

It belongs to the GHMP kinase family. Homoserine kinase subfamily.

Its subcellular location is the cytoplasm. The catalysed reaction is L-homoserine + ATP = O-phospho-L-homoserine + ADP + H(+). Its pathway is amino-acid biosynthesis; L-threonine biosynthesis; L-threonine from L-aspartate: step 4/5. Catalyzes the ATP-dependent phosphorylation of L-homoserine to L-homoserine phosphate. This Campylobacter jejuni subsp. doylei (strain ATCC BAA-1458 / RM4099 / 269.97) protein is Homoserine kinase.